Reading from the N-terminus, the 319-residue chain is Acetyl-coenzyme A carboxylase carboxyl transferase subunit alpha (319 aa).

The CoA carboxyltransferase C-terminal domain maps to 39–296 (EINRLRSKSI…KTQLLLDLTE (258 aa)).

The protein belongs to the AccA family. Acetyl-CoA carboxylase is a heterohexamer composed of biotin carboxyl carrier protein (AccB), biotin carboxylase (AccC) and two subunits each of ACCase subunit alpha (AccA) and ACCase subunit beta (AccD).

Its subcellular location is the cytoplasm. The enzyme catalyses N(6)-carboxybiotinyl-L-lysyl-[protein] + acetyl-CoA = N(6)-biotinyl-L-lysyl-[protein] + malonyl-CoA. It functions in the pathway lipid metabolism; malonyl-CoA biosynthesis; malonyl-CoA from acetyl-CoA: step 1/1. In terms of biological role, component of the acetyl coenzyme A carboxylase (ACC) complex. First, biotin carboxylase catalyzes the carboxylation of biotin on its carrier protein (BCCP) and then the CO(2) group is transferred by the carboxyltransferase to acetyl-CoA to form malonyl-CoA. The sequence is that of Acetyl-coenzyme A carboxylase carboxyl transferase subunit alpha from Blochmanniella pennsylvanica (strain BPEN).